The following is a 327-amino-acid chain: MEGGLSAPLSVRLLLFIALPAAGWLTTNAPRPPSTAPQNGIQINVTTLSKSGEESEEQVVLNITYERGQVYVNDLPVNSGVTRISCQTLIVKSENLEKLEEKHYFGIVTVRILVLERPVTYSASSQLIVIQGEVVEIDGRQAQQKNVTEIDILVKNQRVLRYSSYFLPLEESMLYSISQDSDILFTLPDFSKKGTVSSLQTTSHYLMGNVETTVDGNALPGKLPETPLRAEPPSSYKVMCQWMEKLRKALCRFWSSVVPVLFMFLDVMVVGVLGAAGVIAVLKLLFPVCENKGILQVDKMNGISVPIILYPDGSEKTAQKLTDKTDI.

A signal peptide spans 1-23 (MEGGLSAPLSVRLLLFIALPAAG). The Extracellular portion of the chain corresponds to 24–259 (WLTTNAPRPP…LCRFWSSVVP (236 aa)). N-linked (GlcNAc...) asparagine glycans are attached at residues N44, N62, and N146. A helical membrane pass occupies residues 260-280 (VLFMFLDVMVVGVLGAAGVIA). The Cytoplasmic segment spans residues 281-327 (VLKLLFPVCENKGILQVDKMNGISVPIILYPDGSEKTAQKLTDKTDI).

It localises to the membrane. This Mus musculus (Mouse) protein is Glycoprotein integral membrane protein 1 (Ginm1).